The sequence spans 448 residues: Glutamate--tRNA ligase 1 (448 aa).

A 'HIGH' region motif is present at residues 9–19 (PSPTGKLHIGN). The short motif at 240–244 (KISKR) is the 'KMSKS' region element. Residue lysine 243 participates in ATP binding.

This sequence belongs to the class-I aminoacyl-tRNA synthetase family. Glutamate--tRNA ligase type 1 subfamily. In terms of assembly, monomer.

Its subcellular location is the cytoplasm. The enzyme catalyses tRNA(Glu) + L-glutamate + ATP = L-glutamyl-tRNA(Glu) + AMP + diphosphate. Functionally, catalyzes the attachment of glutamate to tRNA(Glu) in a two-step reaction: glutamate is first activated by ATP to form Glu-AMP and then transferred to the acceptor end of tRNA(Glu). The sequence is that of Glutamate--tRNA ligase 1 from Orientia tsutsugamushi (strain Ikeda) (Rickettsia tsutsugamushi).